The sequence spans 172 residues: Large ribosomal subunit protein bL9 (172 aa).

It belongs to the bacterial ribosomal protein bL9 family.

In terms of biological role, binds to the 23S rRNA. This Chlamydia caviae (strain ATCC VR-813 / DSM 19441 / 03DC25 / GPIC) (Chlamydophila caviae) protein is Large ribosomal subunit protein bL9.